The sequence spans 413 residues: Cardiolipin synthase B (413 aa).

PLD phosphodiesterase domains lie at 108–135 (VFRRMHRKIVVIDARIAFIGGLNYSSEH) and 285–312 (RRRPLHGKVALMDDHWATVGSSNLDPLS). Active-site residues include histidine 113, lysine 115, aspartate 120, histidine 290, lysine 292, and aspartate 297. The tract at residues 388 to 413 (TQVDPPAQPTMETQDRVETENTGVNP) is disordered.

The protein belongs to the phospholipase D family. Cardiolipin synthase subfamily. ClsB sub-subfamily.

It localises to the cell membrane. It carries out the reaction 2 a 1,2-diacyl-sn-glycero-3-phospho-(1'-sn-glycerol) = a cardiolipin + glycerol. Its function is as follows. Catalyzes the phosphatidyl group transfer from one phosphatidylglycerol molecule to another to form cardiolipin (CL) (diphosphatidylglycerol) and glycerol. The sequence is that of Cardiolipin synthase B from Shigella flexneri.